A 324-amino-acid polypeptide reads, in one-letter code: Histidine N-acetyltransferase (324 aa).

In terms of domain architecture, N-acetyltransferase spans 15-151 (FEFVLAAEKE…GILLLSFNAP (137 aa)).

The catalysed reaction is L-histidine + acetyl-CoA = N(alpha)-acetyl-L-histidine + CoA + H(+). Functionally, enzyme responsible for the N-acetyl-histidine (NAH) synthesis, which is a major constituent of brain and lens of ectothermic vertebrates. This Xenopus tropicalis (Western clawed frog) protein is Histidine N-acetyltransferase (hisat).